The chain runs to 874 residues: Alanine--tRNA ligase (874 aa).

The Zn(2+) site is built by His-565, His-569, Cys-666, and His-670.

The protein belongs to the class-II aminoacyl-tRNA synthetase family. The cofactor is Zn(2+).

It localises to the cytoplasm. The catalysed reaction is tRNA(Ala) + L-alanine + ATP = L-alanyl-tRNA(Ala) + AMP + diphosphate. Functionally, catalyzes the attachment of alanine to tRNA(Ala) in a two-step reaction: alanine is first activated by ATP to form Ala-AMP and then transferred to the acceptor end of tRNA(Ala). Also edits incorrectly charged Ser-tRNA(Ala) and Gly-tRNA(Ala) via its editing domain. The polypeptide is Alanine--tRNA ligase (Polynucleobacter asymbioticus (strain DSM 18221 / CIP 109841 / QLW-P1DMWA-1) (Polynucleobacter necessarius subsp. asymbioticus)).